A 470-amino-acid polypeptide reads, in one-letter code: Neuraminidase (470 aa).

The Intravirion portion of the chain corresponds to 1-14 (MNPNQKIITIGSIS). The involved in apical transport and lipid raft association stretch occupies residues 11 to 32 (GSISLGLVVFNVLLHVVSIIVT). A helical membrane pass occupies residues 15-35 (LGLVVFNVLLHVVSIIVTVLV). A hypervariable stalk region region spans residues 32–86 (TVLVLGKGGNNGICNETVVREYNETVRIEKVTQWHNTNVVEYVPYWNGGTYMNNT). Over 36-470 (LGKGGNNGIC…AILPFDIDKM (435 aa)) the chain is Virion surface. 3 N-linked (GlcNAc...) asparagine; by host glycosylation sites follow: N46, N54, and N84. Residues 89-470 (ICDAKGFAPF…AILPFDIDKM (382 aa)) form a head of neuraminidase region. 8 disulfide bridges follow: C90–C417, C122–C127, C182–C229, C231–C236, C277–C290, C279–C288, C316–C335, and C421–C446. R116 provides a ligand contact to substrate. N-linked (GlcNAc...) asparagine; by host glycosylation occurs at N144. Catalysis depends on D149, which acts as the Proton donor/acceptor. R150 is a binding site for substrate. 275–276 (EE) contributes to the substrate binding site. Position 291 (R291) interacts with substrate. Ca(2+) is bound by residues D292, G296, and D322. Substrate is bound at residue R368. N398 carries N-linked (GlcNAc...) asparagine; by host glycosylation. Y402 acts as the Nucleophile in catalysis.

Belongs to the glycosyl hydrolase 34 family. As to quaternary structure, homotetramer. Ca(2+) serves as cofactor. Post-translationally, N-glycosylated.

The protein localises to the virion membrane. The protein resides in the host apical cell membrane. It carries out the reaction Hydrolysis of alpha-(2-&gt;3)-, alpha-(2-&gt;6)-, alpha-(2-&gt;8)- glycosidic linkages of terminal sialic acid residues in oligosaccharides, glycoproteins, glycolipids, colominic acid and synthetic substrates.. Inhibited by the neuraminidase inhibitors zanamivir (Relenza) and oseltamivir (Tamiflu). These drugs interfere with the release of progeny virus from infected cells and are effective against all influenza strains. Resistance to neuraminidase inhibitors is quite rare. Catalyzes the removal of terminal sialic acid residues from viral and cellular glycoconjugates. Cleaves off the terminal sialic acids on the glycosylated HA during virus budding to facilitate virus release. Additionally helps virus spread through the circulation by further removing sialic acids from the cell surface. These cleavages prevent self-aggregation and ensure the efficient spread of the progeny virus from cell to cell. Otherwise, infection would be limited to one round of replication. Described as a receptor-destroying enzyme because it cleaves a terminal sialic acid from the cellular receptors. May facilitate viral invasion of the upper airways by cleaving the sialic acid moieties on the mucin of the airway epithelial cells. Likely to plays a role in the budding process through its association with lipid rafts during intracellular transport. May additionally display a raft-association independent effect on budding. Plays a role in the determination of host range restriction on replication and virulence. Sialidase activity in late endosome/lysosome traffic seems to enhance virus replication. This chain is Neuraminidase, found in Influenza A virus (strain A/Duck/Ukraine/1/1963 H3N8).